We begin with the raw amino-acid sequence, 408 residues long: Argininosuccinate synthase (408 aa).

ATP is bound by residues 11-19 and Ala38; that span reads AYSGGLDTS. L-citrulline contacts are provided by Tyr91 and Ser96. ATP is bound at residue Gly121. L-aspartate-binding residues include Thr123, Asn127, and Asp128. Residue Asn127 coordinates L-citrulline. L-citrulline is bound by residues Arg131, Ser182, Ser191, Glu267, and Tyr279.

It belongs to the argininosuccinate synthase family. Type 1 subfamily. As to quaternary structure, homotetramer.

The protein resides in the cytoplasm. It carries out the reaction L-citrulline + L-aspartate + ATP = 2-(N(omega)-L-arginino)succinate + AMP + diphosphate + H(+). It functions in the pathway amino-acid biosynthesis; L-arginine biosynthesis; L-arginine from L-ornithine and carbamoyl phosphate: step 2/3. The sequence is that of Argininosuccinate synthase from Zymomonas mobilis subsp. mobilis (strain ATCC 31821 / ZM4 / CP4).